A 160-amino-acid chain; its full sequence is RTX-II toxin-activating lysine-acyltransferase ApxIIC (160 aa).

Catalysis depends on residues histidine 23 and aspartate 92.

It belongs to the RTX toxin acyltransferase family. As to quaternary structure, homodimer.

The protein localises to the cytoplasm. The catalysed reaction is a fatty acyl-[ACP] + L-lysyl-[protein] = N(6)-(fatty acyl)-L-lysyl-[protein] + holo-[ACP] + H(+). Its function is as follows. Protein-lysine acyltransferase that catalyzes fatty acylation of the protoxin, thereby converting it to the active toxin. This chain is RTX-II toxin-activating lysine-acyltransferase ApxIIC (apxIIC), found in Actinobacillus pleuropneumoniae (Haemophilus pleuropneumoniae).